The chain runs to 116 residues: Protein Rev (116 aa).

Ser5 and Ser8 each carry phosphoserine; by host CK2. Positions 18–26 (LIKLLYQSN) are homomultimerization. The interval 21–49 (LLYQSNPPPNPEGTRQARRNRRRRWRERQ) is disordered. The Nuclear localization signal and RNA-binding (RRE) signature appears at 34–50 (TRQARRNRRRRWRERQR). The segment covering 36–47 (QARRNRRRRWRE) has biased composition (basic residues). The short motif at 73–84 (LQLPPLERLTLD) is the Nuclear export signal and binding to XPO1 element. Residues Ser92 and Ser99 each carry the phosphoserine; by host modification. The tract at residues 92 to 116 (SGTQGVGSPQILVESPTVLESGTKE) is disordered.

This sequence belongs to the HIV-1 REV protein family. Homomultimer; when bound to the RRE. Multimeric assembly is essential for activity and may involve XPO1. Binds to human KPNB1, XPO1, TNPO1, RANBP5 and IPO7. Interacts with the viral Integrase. Interacts with human KHDRBS1. Interacts with human NAP1; this interaction decreases Rev multimerization and stimulates its activity. Interacts with human DEAD-box helicases DDX3 and DDX24; these interactions may serve for viral RNA export to the cytoplasm and packaging, respectively. Interacts with human PSIP1; this interaction may inhibit HIV-1 DNA integration by promoting dissociation of the Integrase-LEDGF/p75 complex. Asymmetrically arginine dimethylated at one site by host PRMT6. Methylation impairs the RNA-binding activity and export of viral RNA from the nucleus to the cytoplasm. In terms of processing, phosphorylated by protein kinase CK2. Presence of, and maybe binding to the N-terminus of the regulatory beta subunit of CK2 is necessary for CK2-mediated Rev's phosphorylation.

Its subcellular location is the host nucleus. The protein resides in the host nucleolus. The protein localises to the host cytoplasm. In terms of biological role, escorts unspliced or incompletely spliced viral pre-mRNAs (late transcripts) out of the nucleus of infected cells. These pre-mRNAs carry a recognition sequence called Rev responsive element (RRE) located in the env gene, that is not present in fully spliced viral mRNAs (early transcripts). This function is essential since most viral proteins are translated from unspliced or partially spliced pre-mRNAs which cannot exit the nucleus by the pathway used by fully processed cellular mRNAs. Rev itself is translated from a fully spliced mRNA that readily exits the nucleus. Rev's nuclear localization signal (NLS) binds directly to KPNB1/Importin beta-1 without previous binding to KPNA1/Importin alpha-1. KPNB1 binds to the GDP bound form of RAN (Ran-GDP) and targets Rev to the nucleus. In the nucleus, the conversion from Ran-GDP to Ran-GTP dissociates Rev from KPNB1 and allows Rev's binding to the RRE in viral pre-mRNAs. Rev multimerization on the RRE via cooperative assembly exposes its nuclear export signal (NES) to the surface. Rev can then form a complex with XPO1/CRM1 and Ran-GTP, leading to nuclear export of the complex. Conversion from Ran-GTP to Ran-GDP mediates dissociation of the Rev/RRE/XPO1/RAN complex, so that Rev can return to the nucleus for a subsequent round of export. Beside KPNB1, also seems to interact with TNPO1/Transportin-1, RANBP5/IPO5 and IPO7/RANBP7 for nuclear import. The nucleoporin-like HRB/RIP is an essential cofactor that probably indirectly interacts with Rev to release HIV RNAs from the perinuclear region to the cytoplasm. In Homo sapiens (Human), this protein is Protein Rev.